A 244-amino-acid chain; its full sequence is MFRRKLTALDYHNPSGFNCKDETEFRNFIVWLEDQKIRHYKIEDRGNLRNIHSSDWPKFFEKYLKDVNCPFKIQDRQEAIDWLLGLAVRLEYGDNAEKYKDLVPDNRKNTDNAAKNAEPLINLDVNNPDFKAGVMALANLLQIQRHDDYLVMLKAIRILVQERLTQDAVAKANQTKEGLPVALEKHILGFDTGDAVLNEAAQILRLLHIEELRELQTKINEAIVAVQAIIADPKTDHRLGKVGR.

N6-acetyllysine occurs at positions 20, 62, and 98.

The protein belongs to the RTRAF family. Homodimer. Interacts with FAM98A (via N- and C-terminus). Interacts with NIN; which may prevent phosphorylation of NIN. Interacts with POLR2A. Component of a tRNA-splicing ligase complex.

The protein resides in the nucleus. The protein localises to the cytoplasm. It is found in the cytosol. It localises to the perinuclear region. Its subcellular location is the cytoskeleton. The protein resides in the microtubule organizing center. The protein localises to the centrosome. In terms of biological role, RNA-binding protein involved in modulation of mRNA transcription by Polymerase II. Component of the tRNA-splicing ligase complex and is required for tRNA ligation. May be required for RNA transport. This Mus musculus (Mouse) protein is RNA transcription, translation and transport factor protein.